Reading from the N-terminus, the 530-residue chain is Glucose-6-phosphate isomerase (530 aa).

The active-site Proton donor is E356. Residues H387 and K502 contribute to the active site.

It belongs to the GPI family.

The protein localises to the cytoplasm. It carries out the reaction alpha-D-glucose 6-phosphate = beta-D-fructose 6-phosphate. It participates in carbohydrate biosynthesis; gluconeogenesis. It functions in the pathway carbohydrate degradation; glycolysis; D-glyceraldehyde 3-phosphate and glycerone phosphate from D-glucose: step 2/4. Catalyzes the reversible isomerization of glucose-6-phosphate to fructose-6-phosphate. The sequence is that of Glucose-6-phosphate isomerase from Borreliella afzelii (strain PKo) (Borrelia afzelii).